A 347-amino-acid chain; its full sequence is S-adenosylmethionine:tRNA ribosyltransferase-isomerase (347 aa).

This sequence belongs to the QueA family. Monomer.

Its subcellular location is the cytoplasm. The catalysed reaction is 7-aminomethyl-7-carbaguanosine(34) in tRNA + S-adenosyl-L-methionine = epoxyqueuosine(34) in tRNA + adenine + L-methionine + 2 H(+). It participates in tRNA modification; tRNA-queuosine biosynthesis. Its function is as follows. Transfers and isomerizes the ribose moiety from AdoMet to the 7-aminomethyl group of 7-deazaguanine (preQ1-tRNA) to give epoxyqueuosine (oQ-tRNA). In Xylella fastidiosa (strain 9a5c), this protein is S-adenosylmethionine:tRNA ribosyltransferase-isomerase.